Here is a 1299-residue protein sequence, read N- to C-terminus: DNA-directed RNA polymerase subunit beta' (1299 aa).

4 residues coordinate Zn(2+): cysteine 60, cysteine 62, cysteine 75, and cysteine 78. A disordered region spans residues 188–209 (GAKSDQKRRAKDGAEKEMGQTR). The Mg(2+) site is built by aspartate 535, aspartate 537, and aspartate 539. Cysteine 882, cysteine 959, cysteine 966, and cysteine 969 together coordinate Zn(2+).

The protein belongs to the RNA polymerase beta' chain family. As to quaternary structure, the RNAP catalytic core consists of 2 alpha, 1 beta, 1 beta' and 1 omega subunit. When a sigma factor is associated with the core the holoenzyme is formed, which can initiate transcription. Mg(2+) serves as cofactor. Requires Zn(2+) as cofactor.

The catalysed reaction is RNA(n) + a ribonucleoside 5'-triphosphate = RNA(n+1) + diphosphate. In terms of biological role, DNA-dependent RNA polymerase catalyzes the transcription of DNA into RNA using the four ribonucleoside triphosphates as substrates. The protein is DNA-directed RNA polymerase subunit beta' of Clavibacter michiganensis subsp. michiganensis (strain NCPPB 382).